The sequence spans 343 residues: Inositol 2-dehydrogenase (343 aa).

This sequence belongs to the Gfo/Idh/MocA family. In terms of assembly, homotetramer.

It catalyses the reaction myo-inositol + NAD(+) = scyllo-inosose + NADH + H(+). In terms of biological role, involved in the oxidation of myo-inositol (MI) to 2-keto-myo-inositol (2KMI or 2-inosose). This chain is Inositol 2-dehydrogenase, found in Streptomyces avermitilis (strain ATCC 31267 / DSM 46492 / JCM 5070 / NBRC 14893 / NCIMB 12804 / NRRL 8165 / MA-4680).